A 354-amino-acid polypeptide reads, in one-letter code: NADH-ubiquinone oxidoreductase chain 2 (354 aa).

Helical transmembrane passes span 5 to 25, 26 to 46, 60 to 80, 96 to 116, 122 to 142, 149 to 169, 198 to 218, 242 to 262, 274 to 294, and 330 to 350; these read ILMV…SSHH, WFTL…ILSY, FLVQ…QAWL, FLMT…YWFP, VGFI…FAVL, LNIS…GWGG, VSVA…VFFM, AGLV…GFLI, GCFI…FFYL, and VLLS…PVFI.

This sequence belongs to the complex I subunit 2 family.

The protein resides in the mitochondrion inner membrane. It carries out the reaction a ubiquinone + NADH + 5 H(+)(in) = a ubiquinol + NAD(+) + 4 H(+)(out). Functionally, core subunit of the mitochondrial membrane respiratory chain NADH dehydrogenase (Complex I) that is believed to belong to the minimal assembly required for catalysis. Complex I functions in the transfer of electrons from NADH to the respiratory chain. The immediate electron acceptor for the enzyme is believed to be ubiquinone. This chain is NADH-ubiquinone oxidoreductase chain 2 (ND2), found in Patiria pectinifera (Starfish).